The chain runs to 452 residues: tRNA modification GTPase MnmE (452 aa).

3 residues coordinate (6S)-5-formyl-5,6,7,8-tetrahydrofolate: Arg-23, Glu-80, and Lys-119. The 160-residue stretch at 215–374 folds into the TrmE-type G domain; the sequence is GIWIALVGQP…LQQGLLEMIG (160 aa). K(+) is bound at residue Asn-225. Residues 225–230, 244–250, and 269–272 contribute to the GTP site; these read NVGKSS, TEVPGTT, and DTAG. Ser-229 contacts Mg(2+). Residues Thr-244, Val-246, and Thr-249 each contribute to the K(+) site. Thr-250 serves as a coordination point for Mg(2+). Lys-452 is a binding site for (6S)-5-formyl-5,6,7,8-tetrahydrofolate.

Belongs to the TRAFAC class TrmE-Era-EngA-EngB-Septin-like GTPase superfamily. TrmE GTPase family. In terms of assembly, homodimer. Heterotetramer of two MnmE and two MnmG subunits. K(+) is required as a cofactor.

Its subcellular location is the cytoplasm. Functionally, exhibits a very high intrinsic GTPase hydrolysis rate. Involved in the addition of a carboxymethylaminomethyl (cmnm) group at the wobble position (U34) of certain tRNAs, forming tRNA-cmnm(5)s(2)U34. In Nitrosospira multiformis (strain ATCC 25196 / NCIMB 11849 / C 71), this protein is tRNA modification GTPase MnmE.